A 450-amino-acid chain; its full sequence is tRNA-2-methylthio-N(6)-dimethylallyladenosine synthase (450 aa).

One can recognise an MTTase N-terminal domain in the interval 14-132 (GEFFIETWGC…FPNYLNEVKK (119 aa)). 6 residues coordinate [4Fe-4S] cluster: cysteine 23, cysteine 59, cysteine 93, cysteine 169, cysteine 173, and cysteine 176. Residues 155–385 (RKNSMKAFVT…VEVLNEISAK (231 aa)) form the Radical SAM core domain. The TRAM domain occupies 388–450 (KAYEGKIEEV…NSFSLTGEEI (63 aa)).

It belongs to the methylthiotransferase family. MiaB subfamily. Monomer. It depends on [4Fe-4S] cluster as a cofactor.

It is found in the cytoplasm. The catalysed reaction is N(6)-dimethylallyladenosine(37) in tRNA + (sulfur carrier)-SH + AH2 + 2 S-adenosyl-L-methionine = 2-methylsulfanyl-N(6)-dimethylallyladenosine(37) in tRNA + (sulfur carrier)-H + 5'-deoxyadenosine + L-methionine + A + S-adenosyl-L-homocysteine + 2 H(+). In terms of biological role, catalyzes the methylthiolation of N6-(dimethylallyl)adenosine (i(6)A), leading to the formation of 2-methylthio-N6-(dimethylallyl)adenosine (ms(2)i(6)A) at position 37 in tRNAs that read codons beginning with uridine. The chain is tRNA-2-methylthio-N(6)-dimethylallyladenosine synthase from Clostridium botulinum (strain ATCC 19397 / Type A).